A 447-amino-acid polypeptide reads, in one-letter code: Oxysterols receptor LXR-alpha (447 aa).

Residues 1–88 (MSLWLEAPVP…LRPQKRKKGP (88 aa)) form a disordered region. A transactivation AF-1; required for ligand-independent transactivation function region spans residues 1–96 (MSLWLEAPVP…GPAPKMLGNE (96 aa)). Residues 95–170 (NELCSVCGDK…AGMREECVLS (76 aa)) constitute a DNA-binding region (nuclear receptor). 2 consecutive NR C4-type zinc fingers follow at residues 98-118 (CSVC…CEGC) and 134-158 (CHSG…LRKC). The segment at 178 to 203 (KMKRQEEEQAQATSAPPRASSPPQVL) is disordered. Low complexity predominate over residues 187 to 203 (AQATSAPPRASSPPQVL). The segment at 205–447 (QLSPEQLGMI…LLSEIWDVHE (243 aa)) is transactivation AF-2; required for ligand-dependent transactivation function; mediates interaction with CCAR2. Residues 209 to 447 (EQLGMIEKLV…LLSEIWDVHE (239 aa)) form the NR LBD domain.

This sequence belongs to the nuclear hormone receptor family. NR1 subfamily. Heterodimer of NR1H3 and RXR (retinoic acid receptor). Interacts with CCAR2 (via N-terminus) in a ligand-independent manner. Interacts with SIRT1 and this interaction is inhibited by CCAR2. Post-translationally, ubiquitinated by UBR5, leading to its degradation: UBR5 specifically recognizes and binds ligand-bound NR1H3 when it is not associated with coactivators (NCOAs). In presence of NCOAs, the UBR5-degron is not accessible, preventing its ubiquitination and degradation.

It is found in the nucleus. Its subcellular location is the cytoplasm. In terms of biological role, nuclear receptor that exhibits a ligand-dependent transcriptional activation activity. Interaction with retinoic acid receptor (RXR) shifts RXR from its role as a silent DNA-binding partner to an active ligand-binding subunit in mediating retinoid responses through target genes defined by LXRES. LXRES are DR4-type response elements characterized by direct repeats of two similar hexanuclotide half-sites spaced by four nucleotides. Plays an important role in the regulation of cholesterol homeostasis, regulating cholesterol uptake through MYLIP-dependent ubiquitination of LDLR, VLDLR and LRP8. Interplays functionally with RORA for the regulation of genes involved in liver metabolism. Induces LPCAT3-dependent phospholipid remodeling in endoplasmic reticulum (ER) membranes of hepatocytes, driving SREBF1 processing and lipogenesis. Via LPCAT3, triggers the incorporation of arachidonate into phosphatidylcholines of ER membranes, increasing membrane dynamics and enabling triacylglycerols transfer to nascent very low-density lipoprotein (VLDL) particles. Via LPCAT3 also counteracts lipid-induced ER stress response and inflammation, likely by modulating SRC kinase membrane compartmentalization and limiting the synthesis of lipid inflammatory mediators. The chain is Oxysterols receptor LXR-alpha (NR1H3) from Bos taurus (Bovine).